The chain runs to 1402 residues: Defective in tip formation protein A (1402 aa).

Disordered regions lie at residues M1–I20, N37–V94, N109–I133, and K210–K292. 2 repeat units span residues T12–P18 and T40–P46. The segment at T12–Q92 is 4 X 7 AA repeat of T-T-T-[IV]-[AQ]-P-P. The segment covering V38–Q47 has biased composition (low complexity). Pro residues predominate over residues I48–P58. The span at Q59–V94 shows a compositional bias: low complexity. Repeat copies occupy residues T60 to P66 and T86 to Q92. A compositionally biased stretch (low complexity) spans K210 to K234. A compositionally biased stretch (pro residues) spans Q235–L253. Positions L254–Q279 are enriched in low complexity. Positions Q350 to K383 form a coiled coil. 2 disordered regions span residues D429–T453 and N712–N745. A compositionally biased stretch (low complexity) spans Q430–T453.

It is found in the cell surface. Required for correct organization of the actin cytoskeleton and cytokinesis. Also required for apical sorting of prestalk cells, a prerequisite for formation of the tip at the mound stage and subsequent formation of the fruiting body. May be required for cell adhesion. This is Defective in tip formation protein A (dtfA) from Dictyostelium discoideum (Social amoeba).